The primary structure comprises 81 residues: ATP synthase subunit c, chloroplastic (81 aa).

Helical transmembrane passes span 7-27 and 57-77; these read AASVIAAGLAVGLASIGPGIG and LAFMEALTIYGLVVALALLFA.

This sequence belongs to the ATPase C chain family. As to quaternary structure, F-type ATPases have 2 components, F(1) - the catalytic core - and F(0) - the membrane proton channel. F(1) has five subunits: alpha(3), beta(3), gamma(1), delta(1), epsilon(1). F(0) has four main subunits: a(1), b(1), b'(1) and c(10-14). The alpha and beta chains form an alternating ring which encloses part of the gamma chain. F(1) is attached to F(0) by a central stalk formed by the gamma and epsilon chains, while a peripheral stalk is formed by the delta, b and b' chains.

The protein localises to the plastid. It is found in the chloroplast thylakoid membrane. In terms of biological role, f(1)F(0) ATP synthase produces ATP from ADP in the presence of a proton or sodium gradient. F-type ATPases consist of two structural domains, F(1) containing the extramembraneous catalytic core and F(0) containing the membrane proton channel, linked together by a central stalk and a peripheral stalk. During catalysis, ATP synthesis in the catalytic domain of F(1) is coupled via a rotary mechanism of the central stalk subunits to proton translocation. Its function is as follows. Key component of the F(0) channel; it plays a direct role in translocation across the membrane. A homomeric c-ring of between 10-14 subunits forms the central stalk rotor element with the F(1) delta and epsilon subunits. The sequence is that of ATP synthase subunit c, chloroplastic from Staurastrum punctulatum (Green alga).